A 155-amino-acid chain; its full sequence is Ribosomal RNA large subunit methyltransferase H (155 aa).

S-adenosyl-L-methionine is bound by residues Leu-72, Gly-104, and Leu-123–Phe-128.

The protein belongs to the RNA methyltransferase RlmH family. In terms of assembly, homodimer.

It localises to the cytoplasm. The enzyme catalyses pseudouridine(1915) in 23S rRNA + S-adenosyl-L-methionine = N(3)-methylpseudouridine(1915) in 23S rRNA + S-adenosyl-L-homocysteine + H(+). In terms of biological role, specifically methylates the pseudouridine at position 1915 (m3Psi1915) in 23S rRNA. This Kosmotoga olearia (strain ATCC BAA-1733 / DSM 21960 / TBF 19.5.1) protein is Ribosomal RNA large subunit methyltransferase H.